Here is a 615-residue protein sequence, read N- to C-terminus: ATP-dependent zinc metalloprotease FtsH (615 aa).

Residues 1-8 (MAMNKDKP) are Cytoplasmic-facing. Residues 9–29 (WTLYLLAVGLAVLAAVQFGLF) traverse the membrane as a helical segment. The Periplasmic portion of the chain corresponds to 30-104 (SQPAVQAIPY…FSGVVEDNTV (75 aa)). The helical transmembrane segment at 105–125 (ATVMGALMPLLMLLALWYFLF) threads the bilayer. The Cytoplasmic segment spans residues 126–615 (HGLGQKQGLG…ATYVLVDATK (490 aa)). ATP is bound at residue 198–205 (GPPGTGKT). Residue His420 participates in Zn(2+) binding. Glu421 is an active-site residue. His424 and Asp497 together coordinate Zn(2+).

This sequence in the central section; belongs to the AAA ATPase family. In the C-terminal section; belongs to the peptidase M41 family. In terms of assembly, homohexamer. The cofactor is Zn(2+).

It is found in the cell inner membrane. Functionally, acts as a processive, ATP-dependent zinc metallopeptidase for both cytoplasmic and membrane proteins. Plays a role in the quality control of integral membrane proteins. The polypeptide is ATP-dependent zinc metalloprotease FtsH (Pseudomonas putida (strain ATCC 700007 / DSM 6899 / JCM 31910 / BCRC 17059 / LMG 24140 / F1)).